The sequence spans 815 residues: MFMSSSSSSHARRPQLSSFSYLHPPLPFPGLSFSSTRDKRVNFDSTRIISIAKSKPARTTPEYSDVLQTGLPLIVEDDIQEQEEPLEVSLENQIRQGVDIVKSMLGSIEDGEISISAYDTAWVALVENIHHPGSPQFPSTLQWIANNQLPDSSWGDPDMFLTHDRLINTLACVIALKKWNIHPRKCKRGLSFVKENISKLAKEDEEHMLIGFEIAFPSLLEMAKKLGIEIPDDCPAMQDIYTKKDLKLTRIPRDIMHNVPTTLLYSLEGLPSLDWEKLVKLQCQDGSFLFSPSSTACALMHTKDGNCFSYLNNLVHKFNGGVPNVYPVDLFEHIWSVDRLLRLGISRFFRPEIKECLEYVHRYWTKDGICWARNSNVQDIDDTSMGFRLLRLHGYEVSPDVFKQFKKGNEFVCVVGQSDQAITGIYNLYRASQLMFPKETILHGAKEFAGNFLRKKRTANELLDKWIITKDLPGEVGFALDVPWYACLPRVETRLYIEQYGGQDDVWIGKTLYRMPYVNNNVYLELAKLDYNNCQSLHRIEWDNIQKWYEEYNVGGFGVSKRGLLKTYFVATASIFEPERSVERLAWAKTAILVETIRSYFGNSREERIAFPNEFQKAKTRGYINGRRLDGKQATKGLIEMVFATLNHLSQDALVVHGQDITPHLYQSWEKWVLTWQEGGDRGEGEAELLVQTINLMAGHTHSQEEELLYERLFKLTNTVCHQLGHYHHLNKDKQPQQVQDNGGYNNSNPESISKLQIESDMRELVQLVLNSSDGMDSNIKQTFLTVTKSFYYTAFTHPGTVNYHIAKVLFERVV.

A chloroplast-targeting transit peptide spans Met1–Ser50. Residue Lys247 participates in substrate binding. Mg(2+)-binding residues include Asp379 and Asp381. The short motif at Asp379–Asp382 is the DXDD motif element. A substrate-binding site is contributed by Lys465.

This sequence belongs to the terpene synthase family. Tpsc subfamily. Mg(2+) is required as a cofactor.

It localises to the plastid. Its subcellular location is the chloroplast. It catalyses the reaction (2E,6E,10E)-geranylgeranyl diphosphate = (-)-kolavenyl diphosphate. Its activity is regulated as follows. Inhibited by high concentrations of magnesium. Functionally, diterpene synthase that catalyzes the formation of (-)-kolavenyl diphosphate from geranylgeranyl diphosphate (GGPP). This is (-)-kolavenyl diphosphate synthase TPS10, chloroplastic from Tripterygium wilfordii (Thunder God vine).